Reading from the N-terminus, the 269-residue chain is uncharacterized protein (269 aa).

8 helical membrane passes run 9–29 (YIIGLVLALGVSFATLLAHLF), 50–70 (FMLGGYLLVEYLSFLLMIVPL), 82–102 (FSIIHTSIWYNVFVVFTVWAF), 107–127 (LYWTAFFSLCLFSSSFTMYGQ), 147–167 (LVFGKSLWFVVYAFSAALHCT), 173–193 (VFSNVFIWFFAAMYLVPILGF), 200–220 (LVSAYLFLSIGIGQMFIHLFA), and 224–244 (IFAFIIAGLMTLFAALLFLLP).

Its subcellular location is the membrane. This is an uncharacterized protein from Schizosaccharomyces pombe (strain 972 / ATCC 24843) (Fission yeast).